We begin with the raw amino-acid sequence, 151 residues long: MNPAHLLVLSAVCVSLLGASSIPPQPLHLIQFGNMIQCTVPGFLSWIKYADYGCYCGAGGSGTPVDKLDRCCQVHDNCYTQAQKLPACSSIMDSPYVKIYSYDCSERTVTCKADNDECAAFICNCDRVAAHCFAASPYNNNNYNIDTTTRC.

The signal sequence occupies residues 1–21; the sequence is MNPAHLLVLSAVCVSLLGASS. Positions 22-27 are excised as a propeptide; it reads IPPQPL. Cystine bridges form between Cys38-Cys104, Cys54-Cys151, Cys56-Cys72, Cys71-Cys132, Cys78-Cys125, Cys88-Cys118, and Cys111-Cys123. Tyr55, Gly57, and Gly59 together coordinate Ca(2+). The active site involves His75. Asp76 lines the Ca(2+) pocket. Asp126 is an active-site residue.

Requires Ca(2+) as cofactor. As to expression, expressed by the venom gland.

It localises to the secreted. The enzyme catalyses a 1,2-diacyl-sn-glycero-3-phosphocholine + H2O = a 1-acyl-sn-glycero-3-phosphocholine + a fatty acid + H(+). Functionally, snake venom phospholipase A2 (PLA2) that may exhibit cardiotoxicity, myotoxicity, antiplatelet activity, and edema-inducing activity. PLA2 catalyzes the calcium-dependent hydrolysis of the 2-acyl groups in 3-sn-phosphoglycerides. This Ophiophagus hannah (King cobra) protein is Acidic phospholipase A2 1.